The chain runs to 114 residues: Large ribosomal subunit protein bL20 (114 aa).

It belongs to the bacterial ribosomal protein bL20 family.

Its function is as follows. Binds directly to 23S ribosomal RNA and is necessary for the in vitro assembly process of the 50S ribosomal subunit. It is not involved in the protein synthesizing functions of that subunit. The polypeptide is Large ribosomal subunit protein bL20 (Parabacteroides distasonis (strain ATCC 8503 / DSM 20701 / CIP 104284 / JCM 5825 / NCTC 11152)).